Reading from the N-terminus, the 441-residue chain is Damage-control phosphatase ARMT1 (441 aa).

The residue at position 2 (Ala2) is an N-acetylalanine. Residue Lys40 is modified to N6-acetyllysine. The residue at position 102 (Ser102) is a Phosphoserine. 2 residues coordinate Mn(2+): Asp253 and Asn254. 253–254 (DN) provides a ligand contact to substrate. S-adenosyl-L-methionine is bound by residues Glu258 and Asp291. Asp291 contributes to the Mn(2+) binding site. Residues 367-371 (DLNYR) and Lys404 each bind substrate. The Subfamily III RTxK motif motif lies at 401–404 (RTLK).

Belongs to the damage-control phosphatase family. Sugar phosphate phosphatase III subfamily. Requires Mn(2+) as cofactor. It depends on Ni(2+) as a cofactor. In terms of processing, automethylated.

The catalysed reaction is beta-D-fructose 1-phosphate + H2O = D-fructose + phosphate. It carries out the reaction beta-D-fructose 6-phosphate = dihydroxyacetone + D-glyceraldehyde 3-phosphate. It catalyses the reaction L-glutamyl-[protein] + S-adenosyl-L-methionine = [protein]-L-glutamate 5-O-methyl ester + S-adenosyl-L-homocysteine. Functionally, metal-dependent phosphatase that shows phosphatase activity against several substrates, including fructose-1-phosphate and fructose-6-phosphate. Its preference for fructose-1-phosphate, a strong glycating agent that causes DNA damage rather than a canonical yeast metabolite, suggests a damage-control function in hexose phosphate metabolism. Has also been shown to have O-methyltransferase activity that methylates glutamate residues of target proteins to form gamma-glutamyl methyl ester residues. Possibly methylates PCNA, suggesting it is involved in the DNA damage response. The polypeptide is Damage-control phosphatase ARMT1 (Bos taurus (Bovine)).